Consider the following 92-residue polypeptide: Small ribosomal subunit protein uS19 (92 aa).

Belongs to the universal ribosomal protein uS19 family.

In terms of biological role, protein S19 forms a complex with S13 that binds strongly to the 16S ribosomal RNA. This chain is Small ribosomal subunit protein uS19, found in Caulobacter vibrioides (strain ATCC 19089 / CIP 103742 / CB 15) (Caulobacter crescentus).